Reading from the N-terminus, the 87-residue chain is Small ribosomal subunit protein uS15c (87 aa).

Belongs to the universal ribosomal protein uS15 family. In terms of assembly, part of the 30S ribosomal subunit.

It localises to the plastid. It is found in the chloroplast. The protein is Small ribosomal subunit protein uS15c (rps15) of Solanum lycopersicum (Tomato).